Here is a 290-residue protein sequence, read N- to C-terminus: Protein SSO1 (290 aa).

Topologically, residues 1-265 are cytoplasmic; it reads MSYNNPYQLE…ARKARKNKIR (265 aa). The t-SNARE coiled-coil homology domain occupies 190–252; it reads LAEVQARHQE…EQGVGHTDKA (63 aa). The chain crosses the membrane as a helical; Anchor for type IV membrane protein span at residues 266-287; the sequence is CWLIVFAIIVVVVVVVVVPAVV. Residues 288-290 lie on the Extracellular side of the membrane; that stretch reads KTR.

Belongs to the syntaxin family.

It is found in the membrane. Required for vesicle fusion with the plasma membrane. The chain is Protein SSO1 (SSO1) from Saccharomyces cerevisiae (strain ATCC 204508 / S288c) (Baker's yeast).